Reading from the N-terminus, the 860-residue chain is Leucine--tRNA ligase (860 aa).

A 'HIGH' region motif is present at residues 42 to 52 (PYPSGRLHMGH). The 'KMSKS' region motif lies at 619–623 (KMSKS). Position 622 (Lys622) interacts with ATP.

It belongs to the class-I aminoacyl-tRNA synthetase family.

It is found in the cytoplasm. It catalyses the reaction tRNA(Leu) + L-leucine + ATP = L-leucyl-tRNA(Leu) + AMP + diphosphate. The chain is Leucine--tRNA ligase from Escherichia coli O45:K1 (strain S88 / ExPEC).